The following is a 214-amino-acid chain: Pyridoxine/pyridoxamine 5'-phosphate oxidase (214 aa).

Substrate-binding positions include 9–12 (RKDY) and lysine 67. FMN contacts are provided by residues 62–67 (RMVLLK), 77–78 (FT), arginine 83, lysine 84, and glutamine 106. Substrate contacts are provided by tyrosine 124, arginine 128, and serine 132. FMN contacts are provided by residues 141–142 (QS) and tryptophan 186. Substrate is bound at residue 192-194 (RLH). Arginine 196 contacts FMN.

This sequence belongs to the pyridoxamine 5'-phosphate oxidase family. In terms of assembly, homodimer. It depends on FMN as a cofactor.

The catalysed reaction is pyridoxamine 5'-phosphate + O2 + H2O = pyridoxal 5'-phosphate + H2O2 + NH4(+). The enzyme catalyses pyridoxine 5'-phosphate + O2 = pyridoxal 5'-phosphate + H2O2. It participates in cofactor metabolism; pyridoxal 5'-phosphate salvage; pyridoxal 5'-phosphate from pyridoxamine 5'-phosphate: step 1/1. It functions in the pathway cofactor metabolism; pyridoxal 5'-phosphate salvage; pyridoxal 5'-phosphate from pyridoxine 5'-phosphate: step 1/1. Catalyzes the oxidation of either pyridoxine 5'-phosphate (PNP) or pyridoxamine 5'-phosphate (PMP) into pyridoxal 5'-phosphate (PLP). The polypeptide is Pyridoxine/pyridoxamine 5'-phosphate oxidase (Nostoc sp. (strain PCC 7120 / SAG 25.82 / UTEX 2576)).